Here is a 612-residue protein sequence, read N- to C-terminus: MEQYEFLEQIGKGSFGSALLVRHKHEKKKYVLKKIRLARQTQRTRRSAHQEMELISKMRHPFIVEYKDSWVEKACYVCIVIGYCEGGDMAQAIKKSNGVHFQEEKLCKWLVQLLMGLEYLHSNHILHRDVKCSNIFLTKEQDIRLGDFGLAKILTSDDLTSSVVGTPSYMCPELLADIPYGSKSDIWSLGCCIYEMAYLKPAFKAFDMQALINKINKTIVSPLPAKYSGPFRGLVKSMLRKNPEVRPSASDLLRHPHLQPYVLDVKLRLNNLRRKTLPPELPSSKRIMKKAHFSEPAVTCPAFGERQHRSLWNDRALNPEAEEDTASSIKCISRRISDLSIESSSKGTLICKQVSSSACKVSKYPLAKSSVTSRRIMETGRRSDHLHPVSGGGTTSKIIPSARRTSLPLTKRATNQEVAAYNPIVGILQNVKSPEYSINEPQVDKIAIFPLAPYEQDIFFTPMQRKTSSKSSSVSDRSITKDKCTVQTHTTWQGIQLNMVDNISDGSSSSDQNATAGASSHTTSSSSRRCRFDPSSYRQRADALEGLLEFSARLLQEGRYDELNVLLKPFGPGKVSPRETAIWIAKSLKENRDKTKMVDLNVSREIPHVGLL.

A Protein kinase domain is found at 4 to 258; the sequence is YEFLEQIGKG…ASDLLRHPHL (255 aa). Residues 10-18 and Lys-33 each bind ATP; that span reads IGKGSFGSA. Catalysis depends on Asp-129, which acts as the Proton acceptor. Positions 503–513 are enriched in polar residues; it reads ISDGSSSSDQN. The segment at 503 to 534 is disordered; it reads ISDGSSSSDQNATAGASSHTTSSSSRRCRFDP. Positions 514–527 are enriched in low complexity; sequence ATAGASSHTTSSSS.

It belongs to the protein kinase superfamily. NEK Ser/Thr protein kinase family. NIMA subfamily.

The enzyme catalyses L-seryl-[protein] + ATP = O-phospho-L-seryl-[protein] + ADP + H(+). It carries out the reaction L-threonyl-[protein] + ATP = O-phospho-L-threonyl-[protein] + ADP + H(+). Its function is as follows. May be involved in plant development processes. In Arabidopsis thaliana (Mouse-ear cress), this protein is Serine/threonine-protein kinase Nek1 (NEK1).